The primary structure comprises 163 residues: MRIGYGYDVHGLVPGRKLVLGGVTIPYDRGLAGHSDADVLLHALADALLGAAALGDIGHYFPPGDPRYKDADSMLLLREVYRHVQTAGYRLANADATITAQEPRLAPYIDAMRERIAAALGVTKEQISVKATTTEGLGFTGRGEGISAQAVVLLLDREAGAGL.

The a divalent metal cation site is built by Asp8 and His10. Residues 8–10 (DVH) and 34–35 (HS) contribute to the 4-CDP-2-C-methyl-D-erythritol 2-phosphate site. His42 lines the a divalent metal cation pocket. 4-CDP-2-C-methyl-D-erythritol 2-phosphate-binding positions include 56 to 58 (DIG), 132 to 135 (TTTE), Phe139, and Arg142.

It belongs to the IspF family. In terms of assembly, homotrimer. A divalent metal cation serves as cofactor.

The catalysed reaction is 4-CDP-2-C-methyl-D-erythritol 2-phosphate = 2-C-methyl-D-erythritol 2,4-cyclic diphosphate + CMP. Its pathway is isoprenoid biosynthesis; isopentenyl diphosphate biosynthesis via DXP pathway; isopentenyl diphosphate from 1-deoxy-D-xylulose 5-phosphate: step 4/6. In terms of biological role, involved in the biosynthesis of isopentenyl diphosphate (IPP) and dimethylallyl diphosphate (DMAPP), two major building blocks of isoprenoid compounds. Catalyzes the conversion of 4-diphosphocytidyl-2-C-methyl-D-erythritol 2-phosphate (CDP-ME2P) to 2-C-methyl-D-erythritol 2,4-cyclodiphosphate (ME-CPP) with a corresponding release of cytidine 5-monophosphate (CMP). The chain is 2-C-methyl-D-erythritol 2,4-cyclodiphosphate synthase from Moorella thermoacetica (strain ATCC 39073 / JCM 9320).